The chain runs to 255 residues: 5'-nucleotidase SurE (255 aa).

Residues Asp8, Asp9, Ser39, and Asn91 each contribute to the a divalent metal cation site.

It belongs to the SurE nucleotidase family. A divalent metal cation is required as a cofactor.

The protein resides in the cytoplasm. It carries out the reaction a ribonucleoside 5'-phosphate + H2O = a ribonucleoside + phosphate. Functionally, nucleotidase that shows phosphatase activity on nucleoside 5'-monophosphates. This is 5'-nucleotidase SurE from Nitrosospira multiformis (strain ATCC 25196 / NCIMB 11849 / C 71).